The primary structure comprises 118 residues: Small ribosomal subunit protein mS41 (118 aa).

Residues 1 to 24 (MLRVVAKAQYPAAVRCFSTSHAAF) constitute a mitochondrion transit peptide.

This sequence belongs to the mitochondrion-specific ribosomal protein mS41 family.

It is found in the mitochondrion. Functionally, involved in telomere length regulation. In Yarrowia lipolytica (strain CLIB 122 / E 150) (Yeast), this protein is Small ribosomal subunit protein mS41 (FYV4).